Consider the following 281-residue polypeptide: Nucleotide-binding protein PSHAa2554 (281 aa).

8–15 (GRSGSGKS) contacts ATP. Residue 56 to 59 (DVRN) coordinates GTP.

Belongs to the RapZ-like family.

In terms of biological role, displays ATPase and GTPase activities. The polypeptide is Nucleotide-binding protein PSHAa2554 (Pseudoalteromonas translucida (strain TAC 125)).